The chain runs to 424 residues: Serine hydroxymethyltransferase (424 aa).

Residues Leu118 and 122–124 (GHL) each bind (6S)-5,6,7,8-tetrahydrofolate. Residue Lys227 is modified to N6-(pyridoxal phosphate)lysine. (6S)-5,6,7,8-tetrahydrofolate-binding positions include Glu243 and 351–353 (SPF).

This sequence belongs to the SHMT family. Homodimer. Requires pyridoxal 5'-phosphate as cofactor.

It is found in the cytoplasm. The catalysed reaction is (6R)-5,10-methylene-5,6,7,8-tetrahydrofolate + glycine + H2O = (6S)-5,6,7,8-tetrahydrofolate + L-serine. The protein operates within one-carbon metabolism; tetrahydrofolate interconversion. Its pathway is amino-acid biosynthesis; glycine biosynthesis; glycine from L-serine: step 1/1. Catalyzes the reversible interconversion of serine and glycine with tetrahydrofolate (THF) serving as the one-carbon carrier. This reaction serves as the major source of one-carbon groups required for the biosynthesis of purines, thymidylate, methionine, and other important biomolecules. Also exhibits THF-independent aldolase activity toward beta-hydroxyamino acids, producing glycine and aldehydes, via a retro-aldol mechanism. This chain is Serine hydroxymethyltransferase, found in Thermosipho africanus (strain TCF52B).